We begin with the raw amino-acid sequence, 584 residues long: Inactive metallocarboxypeptidase ECM14 (584 aa).

Residues 1–20 (MHLLPVITAVALIYTPLASA) form the signal peptide. The propeptide occupies 21-174 (VPSSSNPQFP…QAVYESYPQP (154 aa)). One can recognise a Peptidase M14 domain in the interval 202-524 (DYQPLSVMTP…NAVLEFGKFL (323 aa)). The Zn(2+) site is built by His-267 and Glu-270. Substrate contacts are provided by residues 267 to 270 (HARE), Arg-325, and 342 to 343 (DR). Cys-336 and Cys-359 are disulfide-bonded. 2 N-linked (GlcNAc...) asparagine glycosylation sites follow: Asn-383 and Asn-389. His-399 provides a ligand contact to Zn(2+). A substrate-binding site is contributed by 400–401 (SY). A disordered region spans residues 564 to 584 (QQLDDEDGEADSHWVLRTQRS).

This sequence belongs to the peptidase M14 family. It depends on Zn(2+) as a cofactor.

The protein localises to the vacuole. It localises to the secreted. Functionally, inactive carboxypeptidase that may play a role in cell wall organization and biogenesis. The sequence is that of Inactive metallocarboxypeptidase ECM14 (ECM14) from Uncinocarpus reesii (strain UAMH 1704).